The following is a 530-amino-acid chain: Chitin synthase 1 (530 aa).

Asn17 carries N-linked (GlcNAc...) asparagine glycosylation. The segment at 22-94 (QESSSNLIQQ…QANNNRKVTR (73 aa)) is disordered. Polar residues predominate over residues 24 to 56 (SSSNLIQQQQPGTNYARNQQTLSSLRSQKQQAE). 3 N-linked (GlcNAc...) asparagine glycosylation sites follow: Asn118, Asn310, and Asn474. Helical transmembrane passes span 477-497 (FFAGVYGLIHFSKIWNSGHGF) and 508-528 (IYNVISLIFSWFSVVIVLSFL).

The protein belongs to the chitin synthase family. Class II subfamily.

The protein localises to the cell membrane. It catalyses the reaction [(1-&gt;4)-N-acetyl-beta-D-glucosaminyl](n) + UDP-N-acetyl-alpha-D-glucosamine = [(1-&gt;4)-N-acetyl-beta-D-glucosaminyl](n+1) + UDP + H(+). In terms of biological role, polymerizes chitin, a structural polymer of the cell wall and septum, by transferring the sugar moiety of UDP-GlcNAc to the non-reducing end of the growing chitin polymer. This chain is Chitin synthase 1, found in Rhizopus delemar (strain RA 99-880 / ATCC MYA-4621 / FGSC 9543 / NRRL 43880) (Mucormycosis agent).